The chain runs to 341 residues: Phosphoribosylformylglycinamidine cyclo-ligase (341 aa).

This sequence belongs to the AIR synthase family.

The protein resides in the cytoplasm. The enzyme catalyses 2-formamido-N(1)-(5-O-phospho-beta-D-ribosyl)acetamidine + ATP = 5-amino-1-(5-phospho-beta-D-ribosyl)imidazole + ADP + phosphate + H(+). It functions in the pathway purine metabolism; IMP biosynthesis via de novo pathway; 5-amino-1-(5-phospho-D-ribosyl)imidazole from N(2)-formyl-N(1)-(5-phospho-D-ribosyl)glycinamide: step 2/2. In Agathobacter rectalis (strain ATCC 33656 / DSM 3377 / JCM 17463 / KCTC 5835 / VPI 0990) (Eubacterium rectale), this protein is Phosphoribosylformylglycinamidine cyclo-ligase.